A 483-amino-acid polypeptide reads, in one-letter code: (R)-mandelonitrile beta-glucosyltransferase (483 aa).

Catalysis depends on H22, which acts as the Proton acceptor. H22 is a binding site for an anthocyanidin. Catalysis depends on D124, which acts as the Charge relay. UDP-alpha-D-glucose contacts are provided by T146, Q363, H378, W381, N382, S383, and E386. A401 is an an anthocyanidin binding site. Positions 402 and 403 each coordinate UDP-alpha-D-glucose.

Belongs to the UDP-glycosyltransferase family.

The enzyme catalyses (R)-mandelonitrile + UDP-alpha-D-glucose = (R)-prunasin + UDP + H(+). In terms of biological role, involved in the biosynthesis of the cyanogenic glycoside (R)-prunasin, a precursor of (R)-amygdalin, which at high concentrations is associated with intense bitterness in kernels of almond. Stereo-selectively glucosylates (R)-mandelonitrile to produce (R)-prunasin. In Prunus dulcis (Almond), this protein is (R)-mandelonitrile beta-glucosyltransferase.